Consider the following 288-residue polypeptide: 4-hydroxybenzoate octaprenyltransferase (288 aa).

Helical transmembrane passes span 23 to 43 (IGSLLLLWPTLWALWLAGRGI), 46 to 66 (AKILVVFVLGVFFMRAAGCVV), 98 to 118 (ILFVVLILLSFGLVLTLNSMT), 141 to 161 (LPQVVLGAAFGWSIPMGFAAV), 163 to 183 (ESLPLVCWLLLLANICWTVAY), 213 to 233 (LIIGLLQLATLLLMVAIGWLM), 234 to 254 (NLGGAFYWSILLAGALFTHQQ), and 268 to 288 (AFLNNNYVGLVLFLGILISYW).

Belongs to the UbiA prenyltransferase family. Requires Mg(2+) as cofactor.

Its subcellular location is the cell inner membrane. The catalysed reaction is all-trans-octaprenyl diphosphate + 4-hydroxybenzoate = 4-hydroxy-3-(all-trans-octaprenyl)benzoate + diphosphate. The protein operates within cofactor biosynthesis; ubiquinone biosynthesis. Functionally, catalyzes the prenylation of para-hydroxybenzoate (PHB) with an all-trans polyprenyl group. Mediates the second step in the final reaction sequence of ubiquinone-8 (UQ-8) biosynthesis, which is the condensation of the polyisoprenoid side chain with PHB, generating the first membrane-bound Q intermediate 3-octaprenyl-4-hydroxybenzoate. The polypeptide is 4-hydroxybenzoate octaprenyltransferase (Yersinia pseudotuberculosis serotype IB (strain PB1/+)).